A 218-amino-acid chain; its full sequence is Small ribosomal subunit protein uS5 (218 aa).

The region spanning 66-129 is the S5 DRBM domain; that stretch reads LKQELLNVNL…REAKLNLVPV (64 aa).

This sequence belongs to the universal ribosomal protein uS5 family. In terms of assembly, part of the 30S ribosomal subunit. Contacts protein S4.

With S4 and S12 plays an important role in translational accuracy. The polypeptide is Small ribosomal subunit protein uS5 (Pyrobaculum aerophilum (strain ATCC 51768 / DSM 7523 / JCM 9630 / CIP 104966 / NBRC 100827 / IM2)).